Reading from the N-terminus, the 237-residue chain is Anti-FlhC(2)FlhD(4) factor YdiV (237 aa).

In terms of domain architecture, EAL spans 1 to 237; it reads MIASLDELYH…VSQLIKLVQR (237 aa).

The protein belongs to the YdiV family. As to quaternary structure, interacts with FlhD in the FlhC(2)FlhD(4) heterohexamer, inhibiting its ability to activate transcription.

Functionally, acts as an anti-FlhC(2)FlhD(4) factor by binding to FlhD, decreasing its ability to bind DNA, and thus negatively regulates expression of flagellar class II operons, decreasing motility in nutrient-poor medium. Required for resistance to host phagocyte oxidase. This Salmonella typhi protein is Anti-FlhC(2)FlhD(4) factor YdiV (ydiV).